The following is a 775-amino-acid chain: Coiled-coil domain-containing protein 33 (775 aa).

Disordered regions lie at residues 1-23 (MGRQ…LDPY) and 68-87 (EANN…PTRA). Positions 7 to 18 (KVPEEPQDRLDT) are enriched in basic and acidic residues. The 130-residue stretch at 12–141 (PQDRLDTSLD…RAFHPYHFEL (130 aa)) folds into the C2 domain. The span at 71–84 (NHSPQARTSVTSEP) shows a compositional bias: polar residues. Coiled coils occupy residues 414-561 (VEMN…ERKE) and 672-715 (DKFS…LQEQ). The segment at 735–775 (RSQGSTTPRQNLKDEGYPGNIERPLQTHLTPGTRDIRHHLR) is disordered.

This is Coiled-coil domain-containing protein 33 (Ccdc33) from Rattus norvegicus (Rat).